The chain runs to 473 residues: Serine/threonine-protein phosphatase 2A activator 1 (473 aa).

The tract at residues 360-473 is disordered; the sequence is NAVPPPTSAH…HVPTKAPWAK (114 aa). Positions 368 to 378 are enriched in polar residues; it reads AHMSTTQSQSR. Positions 395-416 are enriched in low complexity; sequence APWATATQAAPPAGAGTAAPWA.

It belongs to the PTPA-type PPIase family.

The protein localises to the cytoplasm. The protein resides in the nucleus. The catalysed reaction is [protein]-peptidylproline (omega=180) = [protein]-peptidylproline (omega=0). Functionally, PPIases accelerate the folding of proteins. It catalyzes the cis-trans isomerization of proline imidic peptide bonds in oligopeptides. Acts as a regulatory subunit for PP2A-like phosphatases modulating their activity or substrate specificity, probably by inducing a conformational change in the catalytic subunit, a direct target of the PPIase. Can reactivate inactive phosphatase PP2A-phosphatase methylesterase complexes (PP2Ai) in presence of ATP and Mg(2+) by dissociating the inactive form from the complex. The sequence is that of Serine/threonine-protein phosphatase 2A activator 1 (rrd1) from Aspergillus fumigatus (strain ATCC MYA-4609 / CBS 101355 / FGSC A1100 / Af293) (Neosartorya fumigata).